A 300-amino-acid polypeptide reads, in one-letter code: Protoheme IX farnesyltransferase (300 aa).

Helical transmembrane passes span 21-43 (PRVVELLLLTTVPTMILAQRGVP), 45-65 (PLSVLSVLLGGAMSAGAAGAF), 94-114 (ASLIFAWMLCVISVLWFLLFV), 117-137 (LSALLSAIAVFLYAFFYSIVL), 145-167 (IVWGGLAGCMPVLIAWAAVTGSI), 171-193 (AIVLFAVVFLWTPPHYWPLSIHY), 213-233 (LVVLQVLLYAFAVVACTLLLI), 235-255 (VAHMTPLYGLFSAVLGAWFVY), and 272-292 (AMHIFSLSNTYLSLVFLSVGI).

It belongs to the UbiA prenyltransferase family. Protoheme IX farnesyltransferase subfamily.

It localises to the cell membrane. It catalyses the reaction heme b + (2E,6E)-farnesyl diphosphate + H2O = Fe(II)-heme o + diphosphate. It functions in the pathway porphyrin-containing compound metabolism; heme O biosynthesis; heme O from protoheme: step 1/1. Converts heme B (protoheme IX) to heme O by substitution of the vinyl group on carbon 2 of heme B porphyrin ring with a hydroxyethyl farnesyl side group. In Tropheryma whipplei (strain TW08/27) (Whipple's bacillus), this protein is Protoheme IX farnesyltransferase.